We begin with the raw amino-acid sequence, 43 residues long: Neurotrophin-4 (43 aa).

The protein belongs to the NGF-beta family.

Its function is as follows. NT-4 could play a role in oogenesis and/or early embryogenesis. NT-4 interacts with the low affinity NGF receptor and elicits neurite outgrowth from explanted dorsal root ganglia with no and lower activity in sympathetic and nodose ganglia, respectively. The chain is Neurotrophin-4 (NTF4) from Macrovipera lebetinus (Levantine viper).